A 488-amino-acid chain; its full sequence is MSQSVESRTRIKNERYESGVIPYAKMGYWDADYVIKDTDVLAMFRMTPQKGVDPVECAAAIAGESSTATWTVVWTDLLTACDLYRAKAYRVDPVPGATDQYFAYIAYELDLFEEGSLANLTASIIGNVFGFKAVNALRLEDMRLPIAYLKTFQGPATGVIVERERLDKYGRPLLGATVKPKLGLSGKNYGRVVYEGLKGGLDFLKDDENINSQPFMRWKERFLFGIEGVNRAAAAAGEVKGHYFNVTAGTMEDMYERAEFCKEIGSVICMIDLVIGYTAIQSMAIWARKNSMILHLHRAGNSTYSRQKTHGMNFRVICKWMRMAGVDHIHAGTVVGKLEGDPLMVKGFYNTLLETQTDVNLVQGLFFAQDWAALNKCMPVASGGIHCGQMHQLINYLGDDVVLQFGGGTIGHPDGIQAGATANRVALECMVVARNEGRDYVTEGPQILRNAAKSCGPLQTALDLWKDITFNYASTDTADFVETATANK.

Substrate is bound by residues Asn-127 and Thr-177. Catalysis depends on Lys-179, which acts as the Proton acceptor. Position 181 (Lys-181) interacts with substrate. Mg(2+)-binding residues include Lys-205, Asp-207, and Glu-208. Position 205 is an N6-carboxylysine (Lys-205). His-297 serves as the catalytic Proton acceptor. Residues Arg-298, His-330, and Ser-382 each contribute to the substrate site.

This sequence belongs to the RuBisCO large chain family. Type I subfamily. As to quaternary structure, heterohexadecamer of 8 large chains and 8 small chains. Mg(2+) is required as a cofactor.

It is found in the plastid. The protein resides in the chloroplast. It catalyses the reaction 2 (2R)-3-phosphoglycerate + 2 H(+) = D-ribulose 1,5-bisphosphate + CO2 + H2O. It carries out the reaction D-ribulose 1,5-bisphosphate + O2 = 2-phosphoglycolate + (2R)-3-phosphoglycerate + 2 H(+). Functionally, ruBisCO catalyzes two reactions: the carboxylation of D-ribulose 1,5-bisphosphate, the primary event in carbon dioxide fixation, as well as the oxidative fragmentation of the pentose substrate in the photorespiration process. Both reactions occur simultaneously and in competition at the same active site. This chain is Ribulose bisphosphate carboxylase large chain, found in Guillardia theta (Cryptophyte).